A 401-amino-acid polypeptide reads, in one-letter code: Ribosomal RNA dihydrouridine synthase (401 aa).

The FAD site is built by Ala15, Asp34, Asn35, Arg41, Gly47, Asn52, Val132, Glu371, and Phe384.

This sequence belongs to the BaiN/RdsA family. RdsA subfamily. It depends on FAD as a cofactor.

The catalysed reaction is a 5,6-dihydrouridine in mRNA + NAD(+) = a uridine in mRNA + NADH + H(+). In terms of biological role, catalyzes the synthesis of 5,6-dihydrouridine (D) at position 2449 in 23S rRNA. This Haemophilus influenzae (strain ATCC 51907 / DSM 11121 / KW20 / Rd) protein is Ribosomal RNA dihydrouridine synthase.